The chain runs to 899 residues: Plasma membrane ATPase (899 aa).

Positions 1-72 (MSAATEPTKE…TDPSYGLTSD (72 aa)) are disordered. The Cytoplasmic portion of the chain corresponds to 1-96 (MSAATEPTKE…SEETENLFVK (96 aa)). Residues 17-29 (DSDDEDEDIDQLI) are compositionally biased toward acidic residues. A helical membrane pass occupies residues 97-117 (FLMFFIGPIQFVMEAAAILAA). Residues 118–121 (GLED) lie on the Extracellular side of the membrane. A helical membrane pass occupies residues 122-141 (WVDFGVICGLLFLNAAVGFI). Topologically, residues 142–272 (QEYQAGSIVD…GSGHFTEVLN (131 aa)) are cytoplasmic. The chain crosses the membrane as a helical span at residues 273–294 (GIGTILLILVIVTLLLVWVASF). Over 295–305 (YRTNKIVRILR) the chain is Extracellular. The chain crosses the membrane as a helical span at residues 306–328 (YTLAITIVGVPVGLPAVVTTTMA). At 329 to 700 (VGAAYLAKKQ…IAILNRSLNI (372 aa)) the chain is on the cytoplasmic side. The 4-aspartylphosphate intermediate role is filled by Asp-359. Mg(2+) contacts are provided by Asp-615 and Asp-619. A helical membrane pass occupies residues 701-719 (DLVVFIAIFADVATLAIAY). Residues 720 to 735 (DNAPYSPKPVKWNLRR) lie on the Extracellular side of the membrane. A helical transmembrane segment spans residues 736–755 (LWGMSVILGIILAIGTWITL). Residues 756 to 805 (TTMFVPKGGIIQNFGSIDGVLFLQISLTENWLIFITRAAGPFWSSIPSWQ) are Cytoplasmic-facing. The chain crosses the membrane as a helical span at residues 806–826 (LSGAVLIVDIIATMFCLFGWW). Over 827 to 838 (SQNWNDIVTVVR) the chain is Extracellular. A helical membrane pass occupies residues 839–855 (VWIFSFGVFCVMGGAYY). At 856–899 (MMSESEAFDRFMNGKSRRDKPSGRSVEDFLMAMQRVSTQHEKEN) the chain is on the cytoplasmic side.

This sequence belongs to the cation transport ATPase (P-type) (TC 3.A.3) family. Type IIIA subfamily.

The protein localises to the cell membrane. It catalyses the reaction ATP + H2O + H(+)(in) = ADP + phosphate + 2 H(+)(out). Its activity is regulated as follows. Activated by high pH or also by potassium ions when the medium pH is low. The plasma membrane ATPase of plants and fungi is a hydrogen ion pump. The proton gradient it generates drives the active transport of nutrients by H(+)-symport. The resulting external acidification and/or internal alkinization may mediate growth responses. The chain is Plasma membrane ATPase (PMA1) from Kluyveromyces lactis (strain ATCC 8585 / CBS 2359 / DSM 70799 / NBRC 1267 / NRRL Y-1140 / WM37) (Yeast).